The sequence spans 295 residues: Zinc finger transcription factor pqm-1 (295 aa).

A disordered region spans residues 1 to 23 (MSFLNNDFGSPPATSSPPTTMPK). A compositionally biased stretch (low complexity) spans 10 to 22 (SPPATSSPPTTMP). The segment at 161–183 (YMCTVCRKVYGRYNSVSYHVTIY) adopts a C2H2-type 1; degenerate zinc-finger fold. The segment at 227–249 (RKCPHCRHVSKSPAMLEKHIRRH) adopts a C2H2-type 2 zinc-finger fold.

It belongs to the krueppel C2H2-type zinc-finger protein family. In terms of assembly, interacts with ceh-60.

It localises to the chromosome. The protein resides in the nucleus. Its subcellular location is the cytoplasm. Zinc finger transcription factor which acts as both a transcriptional activator and repressor. Binds to the promoters of genes that contain the 5'-CTTATCA-3' DNA consensus sequence in their regulatory region. Functions downstream of the Insulin/IGF-1-like signaling (IIS) mediated pathway. Involved in normal development, lifespan, stress response, lipid metabolism, innate immunity and exit from the developmentally arrested larval state known as dauer. Required for stress-induced expression of hsp-90 and resistance to heat stress, perhaps as part of a systemic stress signaling pathway. Involved in maintenance of proteostasis. Under hypoxic stress increases lipid levels by positively regulating fatty acid synthesis via fat-7 expression. Associates with homeobox protein ceh-60 at the promoters of some stress-responsive genes to regulate expression; may require phosphorylation for transcriptional repression activity. Acts downstream of nhr-14 to activate transcription of intestinal metal transporter smf-3, modulating innate immunity and iron uptake. May act downstream of the mTORC2 signaling mediated pathway. May act in a mutually exclusive manner with the FOXO transcription factor daf-16. This Caenorhabditis elegans protein is Zinc finger transcription factor pqm-1.